A 674-amino-acid polypeptide reads, in one-letter code: MFFKLFTIFFFFIILLSKPLNSSSQSLNFTYNSFHRPPTNISIQGIATVTSNGILKLTDKTVISTGHAFYTEPIRFKDSPNDTVSSFSTTFVIGIYSGIPTISGHGMAFFIAPNPVLSSAMASQYLGLFSSTNNGNDTNHILAVEFDTIMNPEFDDTNDNHVGININSLTSVKSSLVGYWDEINQFNNLTLISRKRMQVWVDYDDRTNQIDVTMAPFGEVKPRKALVSVVRDLSSVFLQDMYLGFSAATGYVLSEHFVFGWSFMVKGKTAPPLTLSKVPKFPRVGPTSLQRFYKNRMPLFSLLLIPVLFVVSLIFLVRFIVRRRRKFAEEFEDWETEFGKNRLRFKDLYYATKGFKDKDLLGSGGFGRVYRGVMPTTKKEIAVKRVSNESRQGLKEFVAEIVSIGRMSHRNLVPLLGYCRRRDELLLVYDYMPNGSLDKYLYDCPEVTLDWKQRFNVIIGVASGLFYLHEEWEQVVIHRDIKASNVLLDAEYNGRLGDFGLARLCDHGSDPQTTRVVGTWGYLAPDHVRTGRATTATDVFAFGVLLLEVACGRRPIEIEIESDESVLLVDSVFGFWIEGNILDATDPNLGSVYDQREVETVLKLGLLCSHSDPQVRPTMRQVLQYLRGDATLPDLSPLDFRGSGKMLGMNHRFSESCTFSSGSSIAYSIVSGGR.

Positions 1–22 (MFFKLFTIFFFFIILLSKPLNS) are cleaved as a signal peptide. 6 N-linked (GlcNAc...) asparagine glycosylation sites follow: Asn-21, Asn-28, Asn-40, Asn-81, Asn-136, and Asn-188. The Extracellular portion of the chain corresponds to 23–296 (SSQSLNFTYN…TSLQRFYKNR (274 aa)). A legume-lectin like region spans residues 26–263 (SLNFTYNSFH…SEHFVFGWSF (238 aa)). Residues 297-317 (MPLFSLLLIPVLFVVSLIFLV) form a helical membrane-spanning segment. The Cytoplasmic portion of the chain corresponds to 318 to 674 (RFIVRRRRKF…IAYSIVSGGR (357 aa)). In terms of domain architecture, Protein kinase spans 355–632 (FKDKDLLGSG…LQYLRGDATL (278 aa)). ATP is bound by residues 361-369 (LGSGGFGRV) and Lys-384. Asp-480 functions as the Proton acceptor in the catalytic mechanism.

This sequence in the C-terminal section; belongs to the protein kinase superfamily. Ser/Thr protein kinase family. In the N-terminal section; belongs to the leguminous lectin family.

It is found in the cell membrane. The enzyme catalyses L-seryl-[protein] + ATP = O-phospho-L-seryl-[protein] + ADP + H(+). It catalyses the reaction L-threonyl-[protein] + ATP = O-phospho-L-threonyl-[protein] + ADP + H(+). This chain is L-type lectin-domain containing receptor kinase IV.3 (LECRK43), found in Arabidopsis thaliana (Mouse-ear cress).